The chain runs to 444 residues: Aflatoxin biosynthesis regulatory protein (444 aa).

Residues 1 to 25 (MVDHISPRASPGPIRSSQTRRARKL) form a disordered region. Residues 29-56 (CTSCASSKVRCTKEKPACARCIERGLAC) constitute a DNA-binding region (zn(2)-C6 fungal-type). The tract at residues 64 to 174 (MGRNPRAPSP…AGQEQSTLSS (111 aa)) is disordered. The segment covering 106–116 (TQAHTHAHSHP) has biased composition (basic residues). Over residues 120-130 (PQSHPQSNQPP) the composition is skewed to low complexity. The segment covering 136–149 (PNGSSSVSAIFSHQ) has biased composition (polar residues).

In terms of assembly, interacts with aflS.

Its subcellular location is the nucleus. Functionally, transcription factor; part of the gene cluster that mediates the biosynthesis of aflatoxin, a polyketide-derived furanocoumarin which is part of the most toxic and carcinogenic compounds among the known mycotoxins. Binds to at least 17 genes in the aflatoxin biosynthetic cluster, leading to the activation of an enzymatic cascade reaction that results in aflatoxin biosynthesis. Promoter regions of several biosynthesis genes are bound by aflR in a dimeric form with a 5'-TCG(N5)CGA-3' binding motif. AflR also recognizes 5'-TTAGGCCTAA-3' and 5'-TCGCAGCCCGG-3' binding sequences. AflR achieves its binding specificity through a mechanism in which either two copies of aflR or its complex with aflS bind to target sites on DNA in a highly cooperative manner. AflS acts as a modulator of aflR's DNA-binding by decreasing its DNA-binding affinity. In addition to aflatoxin biosynthesis, also plays a positive role in the fungal growth, spore germination, sclerotial development, and carbohydrate metabolism. This chain is Aflatoxin biosynthesis regulatory protein, found in Aspergillus flavus (strain ATCC 200026 / FGSC A1120 / IAM 13836 / NRRL 3357 / JCM 12722 / SRRC 167).